A 445-amino-acid chain; its full sequence is Lipoyl synthase, mitochondrial (445 aa).

Residues 1-40 (MRPGSWRVITHYGFTGPIQRLQAPLRRSLARAAALSTRSY) constitute a mitochondrion transit peptide. Over residues 42–71 (TIPSAPSSQPTSQESSPAASASASASAPAT) the composition is skewed to low complexity. Residues 42-77 (TIPSAPSSQPTSQESSPAASASASASAPATKPRPTY) are disordered. Residues cysteine 157, cysteine 162, cysteine 168, cysteine 188, cysteine 192, cysteine 195, and serine 405 each contribute to the [4Fe-4S] cluster site. In terms of domain architecture, Radical SAM core spans 171 to 394 (GSNKAAATAT…RQRALDMGFL (224 aa)).

The protein belongs to the radical SAM superfamily. Lipoyl synthase family. [4Fe-4S] cluster is required as a cofactor.

It is found in the mitochondrion. The enzyme catalyses [[Fe-S] cluster scaffold protein carrying a second [4Fe-4S](2+) cluster] + N(6)-octanoyl-L-lysyl-[protein] + 2 oxidized [2Fe-2S]-[ferredoxin] + 2 S-adenosyl-L-methionine + 4 H(+) = [[Fe-S] cluster scaffold protein] + N(6)-[(R)-dihydrolipoyl]-L-lysyl-[protein] + 4 Fe(3+) + 2 hydrogen sulfide + 2 5'-deoxyadenosine + 2 L-methionine + 2 reduced [2Fe-2S]-[ferredoxin]. Its pathway is protein modification; protein lipoylation via endogenous pathway; protein N(6)-(lipoyl)lysine from octanoyl-[acyl-carrier-protein]: step 2/2. In terms of biological role, catalyzes the radical-mediated insertion of two sulfur atoms into the C-6 and C-8 positions of the octanoyl moiety bound to the lipoyl domains of lipoate-dependent enzymes, thereby converting the octanoylated domains into lipoylated derivatives. This chain is Lipoyl synthase, mitochondrial, found in Sordaria macrospora (strain ATCC MYA-333 / DSM 997 / K(L3346) / K-hell).